Consider the following 261-residue polypeptide: tRNA 5-carboxymethoxyuridine methyltransferase (261 aa).

Residues Arg-26, 52 to 53, Asp-73, 102 to 103, and His-119 contribute to the S-adenosyl-L-methionine site; these read GG and AQ.

It belongs to the class I-like SAM-binding methyltransferase superfamily. CmoM family.

The catalysed reaction is 5-carboxymethoxyuridine(34) in tRNA + S-adenosyl-L-methionine = 5-methoxycarbonylmethoxyuridine(34) in tRNA + S-adenosyl-L-homocysteine. Its function is as follows. Catalyzes the methylation of 5-carboxymethoxyuridine (cmo5U) to form 5-methoxycarbonylmethoxyuridine (mcmo5U) at position 34 in tRNAs. Four tRNAs (tRNA(Ala1), tRNA(Ser1), tRNA(Pro3) and tRNA(Thr4)) are fully modified with mcmo5U in stationary-phase E.coli. Also present at low frequency in tRNA(Leu3) and tRNA(Val1). This Escherichia coli (strain K12) protein is tRNA 5-carboxymethoxyuridine methyltransferase.